The primary structure comprises 235 residues: Ribonuclease 3 (235 aa).

Positions 6-131 constitute an RNase III domain; sequence IDQLEKLTGH…LIAVIYLDGG (126 aa). Glutamate 44 serves as a coordination point for Mg(2+). Aspartate 48 is an active-site residue. Aspartate 117 and glutamate 120 together coordinate Mg(2+). The active site involves glutamate 120. Residues 156–225 enclose the DRBM domain; sequence DAKTQLQEWA…AEKILRREGI (70 aa).

Belongs to the ribonuclease III family. In terms of assembly, homodimer. The cofactor is Mg(2+).

Its subcellular location is the cytoplasm. The catalysed reaction is Endonucleolytic cleavage to 5'-phosphomonoester.. Functionally, digests double-stranded RNA. Involved in the processing of primary rRNA transcript to yield the immediate precursors to the large and small rRNAs (23S and 16S). Processes some mRNAs, and tRNAs when they are encoded in the rRNA operon. Processes pre-crRNA and tracrRNA of type II CRISPR loci if present in the organism. The polypeptide is Ribonuclease 3 (Bartonella henselae (strain ATCC 49882 / DSM 28221 / CCUG 30454 / Houston 1) (Rochalimaea henselae)).